We begin with the raw amino-acid sequence, 398 residues long: Streptopain (398 aa).

A signal peptide spans 1–27; it reads MNKKKLGIRLLSLLALGGFVLANPVFA. The propeptide occupies 28–145; sequence DQNFARNEKE…TTYAGTAEIK (118 aa). C192 acts as the Nucleophile in catalysis. Position 192 is a cysteine methyl disulfide; in zymogen form (C192). S282 and G339 together coordinate a protein. H340 serves as the catalytic Proton acceptor. The interval 368-390 is C-terminal active site loop; the sequence is RLDALNPSALGTGGGAGGFNGYQ.

It belongs to the peptidase C10 family. In terms of assembly, monomer. Post-translationally, the mature protease is derived from the precursor sequence by cleavage, either in cis via an autocatalytic mechanism, or in trans by mature SpeB or host proteases (trypsin, plasmin or subtilisin). Maturation can involve a number of protein cleavage intermediates. Mature SpeB probably plays the most important role in protein maturation in physiological conditions. Methylthiolation at Cys-192 of the inactive zymogen form is probably involved in the mechanism of secretion of the proteinase into the culture fluid.

The protein resides in the secreted. It localises to the host extracellular space. Its subcellular location is the host cytoplasm. The enzyme catalyses Preferential cleavage with hydrophobic residues at P2, P1 and P1'.. Its activity is regulated as follows. Synthesized as an inactive zymogen to protect the intracellular components of the bacteria from proteolytic activity during protein production. Once secreted into the extracellular milieu, cleaved into the active protease: maturation can be mediated in cis by autocatalytic cleavage, or in trans by mature SpeB or host proteases. Protease activity is strongly inhibited by zinc and copper, which prevent its maturation into an active protease: inhibition by metal ions may be required to prevent proteolysis of streptococcal proteins. Cysteine protease that acts as a key streptococcal virulence factor by cleaving host proteins involved in immune response. Triggers inflammation by mediating cleavage of host proteins, which can both promote host pathogenesis by triggering sterile inflammation and/or restrict streptococcal infection, depending on host immune statue and infection site. Cleaves host gasdermin-A (GSDMA) in epithelial cells, promoting GSDMA activation and formation of gasdermin pores, triggering pyroptosis. Pyroptosis triggers the elimination of the infected skin cell, depriving the pathogen of its protective niche, while inducing an inflammatory response. This ultimately prevents bacterial penetration of the epithelial barrier and a subsequent systemic dissemination of the pathogen. Also mediates cleavage of the cytokine precursor interleukin-1 beta (IL1B) to its mature form, resulting in inflammation and septic shock. SpeB-mediated maturation of IL1B plays a dual role depending on infection site: while IL1B inflammatory response prevents bacterial growth during invasive skin infections, it promotes streptococcal infection of the nasopharynx by disrupting colonization resistance mediated by the microbiota. Inhibits host autophagy be catalyzing cleavage and inactivation of key autophagy factors, such as CALCOCO2, NBR1 and SQSTM1. Cleaves and inhibits a number of complement factors, such as C2, C3-beta chain of C3, C4, C5 or SERPING1, thereby promoting evasion of host immunity. May also impair adaptive immunity by catalyzing cleavage and degradation of host immunoglobulins to promote immune system evasion; the relevance of this activity is however unsure in vivo. Catalyzes maturation and release of the peptide hormone bradykinin from the precursor Kininogen-1 (KNG1) to produce hypotension during septic shock. Also involved in bacterial translocation across the host epithelial barrier by mediating cleavage and degradation of host epithelial junction proteins, such as CDH1 and OCLN. Additionally, has been involved in degradation of fibronectin and vitronectin, two host extracellular matrix proteins involved in tissue integrity. Also able to catalyze cleavage and degradation of streptococcal proteins, such as C5a peptidase, EndoS or SmeZ. Degradation of streptococcal proteins is however strictly regulated to preserve integrity of other virulence factors. In Streptococcus pyogenes serotype M3 (strain ATCC BAA-595 / MGAS315), this protein is Streptopain (speB).